The sequence spans 271 residues: Glutamate racemase (271 aa).

Substrate is bound by residues 12–13 (DS) and 44–45 (YG). C75 acts as the Proton donor/acceptor in catalysis. Residue 76 to 77 (NS) participates in substrate binding. Catalysis depends on C185, which acts as the Proton donor/acceptor. 186–187 (TH) is a substrate binding site.

Belongs to the aspartate/glutamate racemases family.

It carries out the reaction L-glutamate = D-glutamate. Its pathway is cell wall biogenesis; peptidoglycan biosynthesis. Provides the (R)-glutamate required for cell wall biosynthesis. This Mycobacterium bovis (strain ATCC BAA-935 / AF2122/97) protein is Glutamate racemase.